Reading from the N-terminus, the 89-residue chain is UPF0367 protein CYB_2632 (89 aa).

Residues 69–89 (SKSGSASPMGTRPGFLAQLQS) form a disordered region.

This sequence belongs to the UPF0367 family.

In Synechococcus sp. (strain JA-2-3B'a(2-13)) (Cyanobacteria bacterium Yellowstone B-Prime), this protein is UPF0367 protein CYB_2632.